Here is a 517-residue protein sequence, read N- to C-terminus: ATP synthase subunit alpha 2 (517 aa).

Position 173–180 (173–180 (GDRQTGKT)) interacts with ATP.

The protein belongs to the ATPase alpha/beta chains family. F-type ATPases have 2 components, CF(1) - the catalytic core - and CF(0) - the membrane proton channel. CF(1) has five subunits: alpha(3), beta(3), gamma(1), delta(1), epsilon(1). CF(0) has three main subunits: a(1), b(2) and c(9-12). The alpha and beta chains form an alternating ring which encloses part of the gamma chain. CF(1) is attached to CF(0) by a central stalk formed by the gamma and epsilon chains, while a peripheral stalk is formed by the delta and b chains.

It localises to the cell inner membrane. The catalysed reaction is ATP + H2O + 4 H(+)(in) = ADP + phosphate + 5 H(+)(out). Produces ATP from ADP in the presence of a proton gradient across the membrane. The alpha chain is a regulatory subunit. The protein is ATP synthase subunit alpha 2 of Legionella pneumophila subsp. pneumophila (strain Philadelphia 1 / ATCC 33152 / DSM 7513).